Consider the following 164-residue polypeptide: HTH-type transcriptional regulator IscR (164 aa).

Residues 2 to 131 (RLTSKGRYAV…NNITLGELVN (130 aa)) form the HTH rrf2-type domain. The segment at residues 28–51 (LADISERQGISLSYLEQLFSRLRK) is a DNA-binding region (H-T-H motif). Positions 92, 98, and 104 each coordinate [2Fe-2S] cluster.

It depends on [2Fe-2S] cluster as a cofactor.

Regulates the transcription of several operons and genes involved in the biogenesis of Fe-S clusters and Fe-S-containing proteins. This is HTH-type transcriptional regulator IscR from Salmonella agona (strain SL483).